Consider the following 774-residue polypeptide: 5-methyltetrahydropteroyltriglutamate--homocysteine methyltransferase (774 aa).

Residues 23–26 (RELK) and Lys123 each bind 5-methyltetrahydropteroyltri-L-glutamate. L-homocysteine contacts are provided by residues 446–448 (IGS) and Glu499. L-methionine-binding positions include 446–448 (IGS) and Glu499. Residues 530–531 (RC) and Trp576 contribute to the 5-methyltetrahydropteroyltri-L-glutamate site. Residue Asp614 coordinates L-homocysteine. L-methionine is bound at residue Asp614. 5-methyltetrahydropteroyltri-L-glutamate is bound at residue Glu620. Zn(2+) is bound by residues His656, Cys658, and Glu680. The active-site Proton donor is the His709. Residue Cys741 participates in Zn(2+) binding.

The protein belongs to the vitamin-B12 independent methionine synthase family. It depends on Zn(2+) as a cofactor.

The enzyme catalyses 5-methyltetrahydropteroyltri-L-glutamate + L-homocysteine = tetrahydropteroyltri-L-glutamate + L-methionine. The protein operates within amino-acid biosynthesis; L-methionine biosynthesis via de novo pathway; L-methionine from L-homocysteine (MetE route): step 1/1. Functionally, catalyzes the transfer of a methyl group from 5-methyltetrahydrofolate to homocysteine resulting in methionine formation. In Aliivibrio fischeri (strain MJ11) (Vibrio fischeri), this protein is 5-methyltetrahydropteroyltriglutamate--homocysteine methyltransferase.